The sequence spans 136 residues: ATP synthase epsilon chain (136 aa).

This sequence belongs to the ATPase epsilon chain family. As to quaternary structure, F-type ATPases have 2 components, CF(1) - the catalytic core - and CF(0) - the membrane proton channel. CF(1) has five subunits: alpha(3), beta(3), gamma(1), delta(1), epsilon(1). CF(0) has three main subunits: a, b and c.

It localises to the cell inner membrane. Produces ATP from ADP in the presence of a proton gradient across the membrane. The polypeptide is ATP synthase epsilon chain (Persephonella marina (strain DSM 14350 / EX-H1)).